The sequence spans 87 residues: Putative defensin-like protein 231 (87 aa).

The N-terminal stretch at 1–26 (MKFATCFLVSYVLVFLVLSVCKEVEA) is a signal peptide. 4 disulfide bridges follow: C30–C85, C40–C66, C48–C79, and C64–C81.

This sequence belongs to the DEFL family.

It localises to the secreted. The sequence is that of Putative defensin-like protein 231 (SCRL25) from Arabidopsis thaliana (Mouse-ear cress).